The sequence spans 303 residues: MALSLLLAVVCAKPLVSRAELRRIQALNPPWKAGMPKRFENVTEDEFRSMLIRPDRLRARSGSLPPISITEVQELVDPIPPQFDFRDEYPQCVKPALDQGSCGSCWAFSAIGVFGDRRCAMGIDKEAVSYSQQHLISCSLENFGCDGGDFQPTWSFLTFTGATTAECVKYVDYGHTVASPCPAVCDDGSPIQLYKAHGYGQVSKSVPAIMGMLVAGGPLQTMIVVYADLSYYESGVYKHTYGTINLGFHALEIVGYGTTDDGTDYWIIKNSWGPDWGENGYFRIVRGVNECRIEDEIYAVYLD.

Positions 1-19 are cleaved as a signal peptide; the sequence is MALSLLLAVVCAKPLVSRA. Residue N41 is glycosylated (N-linked (GlcNAc...) asparagine). Intrachain disulfides connect C92-C119, C102-C145, and C138-C181. Residue C105 is part of the active site. Residues H249 and N270 contribute to the active site.

The protein belongs to the peptidase C1 family.

Its subcellular location is the vacuole. In terms of biological role, thiol protease which is required for parasite excystation and invasion of the proximal small intestine of the human host. This chain is Cathepsin B-like CP1 (CP1), found in Giardia intestinalis (Giardia lamblia).